We begin with the raw amino-acid sequence, 173 residues long: Large ribosomal subunit protein uL15 (173 aa).

Residues 1–11 (MKLNEIRDNQG) show a composition bias toward basic and acidic residues. The tract at residues 1-50 (MKLNEIRDNQGARKSRVRVGRGIGSGLGKTGGRGQKGQKSRSGVSINGFE) is disordered. Residues 21-35 (RGIGSGLGKTGGRGQ) are compositionally biased toward gly residues.

It belongs to the universal ribosomal protein uL15 family. Part of the 50S ribosomal subunit.

Functionally, binds to the 23S rRNA. In Rhizorhabdus wittichii (strain DSM 6014 / CCUG 31198 / JCM 15750 / NBRC 105917 / EY 4224 / RW1) (Sphingomonas wittichii), this protein is Large ribosomal subunit protein uL15.